A 494-amino-acid polypeptide reads, in one-letter code: 3-octaprenyl-4-hydroxybenzoate carboxy-lyase (494 aa).

Asn-172 is a binding site for Mn(2+). Prenylated FMN is bound by residues 175–177, 189–191, and 194–195; these read IYR, RWL, and RG. Glu-238 lines the Mn(2+) pocket. The Proton donor role is filled by Asp-287.

It belongs to the UbiD family. As to quaternary structure, homohexamer. Requires prenylated FMN as cofactor. The cofactor is Mn(2+).

The protein resides in the cell membrane. It carries out the reaction a 4-hydroxy-3-(all-trans-polyprenyl)benzoate + H(+) = a 2-(all-trans-polyprenyl)phenol + CO2. The protein operates within cofactor biosynthesis; ubiquinone biosynthesis. Functionally, catalyzes the decarboxylation of 3-octaprenyl-4-hydroxy benzoate to 2-octaprenylphenol, an intermediate step in ubiquinone biosynthesis. The protein is 3-octaprenyl-4-hydroxybenzoate carboxy-lyase of Erwinia tasmaniensis (strain DSM 17950 / CFBP 7177 / CIP 109463 / NCPPB 4357 / Et1/99).